A 205-amino-acid polypeptide reads, in one-letter code: Small ribosomal subunit protein uS4 (205 aa).

The segment at 1–49 (MSKRQSAKYKLDRRMGENIWGRPKSPVNRREYGPGQHGQRRKGKLSDFG) is disordered. In terms of domain architecture, S4 RNA-binding spans 94–157 (SRLDAIVFRA…KQLTVVLESV (64 aa)).

Belongs to the universal ribosomal protein uS4 family. Part of the 30S ribosomal subunit. Contacts protein S5. The interaction surface between S4 and S5 is involved in control of translational fidelity.

Functionally, one of the primary rRNA binding proteins, it binds directly to 16S rRNA where it nucleates assembly of the body of the 30S subunit. Its function is as follows. With S5 and S12 plays an important role in translational accuracy. This chain is Small ribosomal subunit protein uS4, found in Chelativorans sp. (strain BNC1).